The chain runs to 702 residues: Polyribonucleotide nucleotidyltransferase (702 aa).

Residues Asp-485 and Asp-491 each coordinate Mg(2+). In terms of domain architecture, KH spans 552–612 (PRTEIICIDP…EGVKKAISII (61 aa)). The region spanning 622-690 (GEIYLGKVTK…NQGRINLSRK (69 aa)) is the S1 motif domain.

Belongs to the polyribonucleotide nucleotidyltransferase family. Mg(2+) is required as a cofactor.

The protein resides in the cytoplasm. It catalyses the reaction RNA(n+1) + phosphate = RNA(n) + a ribonucleoside 5'-diphosphate. Functionally, involved in mRNA degradation. Catalyzes the phosphorolysis of single-stranded polyribonucleotides processively in the 3'- to 5'-direction. The chain is Polyribonucleotide nucleotidyltransferase from Clostridium botulinum (strain 657 / Type Ba4).